A 250-amino-acid polypeptide reads, in one-letter code: Probable transcriptional regulatory protein DP2908 (250 aa).

It belongs to the TACO1 family.

The protein resides in the cytoplasm. The sequence is that of Probable transcriptional regulatory protein DP2908 from Desulfotalea psychrophila (strain LSv54 / DSM 12343).